We begin with the raw amino-acid sequence, 265 residues long: 3-methyl-2-oxobutanoate hydroxymethyltransferase (265 aa).

Positions 46 and 85 each coordinate Mg(2+). Residues 46–47 (DS), aspartate 85, and lysine 114 contribute to the 3-methyl-2-oxobutanoate site. Residue glutamate 116 coordinates Mg(2+). Residue glutamate 183 is the Proton acceptor of the active site.

The protein belongs to the PanB family. As to quaternary structure, homodecamer; pentamer of dimers. Mg(2+) serves as cofactor.

The protein resides in the cytoplasm. It catalyses the reaction 3-methyl-2-oxobutanoate + (6R)-5,10-methylene-5,6,7,8-tetrahydrofolate + H2O = 2-dehydropantoate + (6S)-5,6,7,8-tetrahydrofolate. Its pathway is cofactor biosynthesis; coenzyme A biosynthesis. In terms of biological role, catalyzes the reversible reaction in which hydroxymethyl group from 5,10-methylenetetrahydrofolate is transferred onto alpha-ketoisovalerate to form ketopantoate. This is 3-methyl-2-oxobutanoate hydroxymethyltransferase from Caldivirga maquilingensis (strain ATCC 700844 / DSM 13496 / JCM 10307 / IC-167).